Consider the following 736-residue polypeptide: Oxysterol-binding protein-related protein 9 (736 aa).

At A2 the chain carries N-acetylalanine. Residues 2-99 enclose the PH domain; sequence ASIVEGPLSK…WIHALEETIL (98 aa). Residues 209–368 are disordered; it reads LEPVISTMPS…RDDDGEAGSV (160 aa). The span at 253–274 shows a compositional bias: low complexity; sequence TPTPNSTGSGNSPPSSSLTPPS. 5 positions are modified to phosphoserine: S306, S324, S325, S326, and S329. Composition is skewed to polar residues over residues 314 to 329 and 336 to 348; these read SSGS…SGNS and TESL…NGTS. Position 611 is a phosphoserine (S611).

It belongs to the OSBP family. Heterodimer with OSBPL11. Interacts with OSBPL10.

It localises to the late endosome membrane. The protein resides in the golgi apparatus. The protein localises to the trans-Golgi network membrane. The enzyme catalyses a 1,2-diacyl-sn-glycero-3-phospho-(1D-myo-inositol 4-phosphate)(out) + a 1,2-diacyl-sn-glycero-3-phospho-L-serine(in) = a 1,2-diacyl-sn-glycero-3-phospho-(1D-myo-inositol 4-phosphate)(in) + a 1,2-diacyl-sn-glycero-3-phospho-L-serine(out). Interacts with OSBPL11 to function as lipid transfer proteins. Together they form a heterodimer that localizes at the ER-trans-Golgi membrane contact sites, and exchanges phosphatidylserine (1,2-diacyl-sn-glycero-3-phospho-L-serine, PS) for phosphatidylinositol-4-phosphate (1,2-diacyl-sn-glycero-3-phospho-(1D-myo-inositol 4-phosphate), PI(4)P) between the two organelles, a step that is critical for sphingomyelin synthesis in the Golgi complex. The protein is Oxysterol-binding protein-related protein 9 (Osbpl9) of Mus musculus (Mouse).